Here is a 96-residue protein sequence, read N- to C-terminus: Small ribosomal subunit protein bS16 (96 aa).

Belongs to the bacterial ribosomal protein bS16 family.

The polypeptide is Small ribosomal subunit protein bS16 (Anaplasma phagocytophilum (strain HZ)).